Reading from the N-terminus, the 301-residue chain is Epimerase family protein Mb2239 (301 aa).

The protein belongs to the NAD(P)-dependent epimerase/dehydratase family. SDR39U1 subfamily.

The chain is Epimerase family protein Mb2239 from Mycobacterium bovis (strain ATCC BAA-935 / AF2122/97).